Reading from the N-terminus, the 324-residue chain is S-methyl-5'-thioadenosine phosphorylase (324 aa).

Residues S14, 57-58 (RH), and 90-91 (SA) contribute to the phosphate site. M196 is a substrate binding site. S197 is a phosphate binding site. 220–222 (DYD) contacts substrate.

Belongs to the PNP/MTAP phosphorylase family. MTAP subfamily. In terms of assembly, homotrimer.

Its subcellular location is the cytoplasm. It is found in the nucleus. The enzyme catalyses S-methyl-5'-thioadenosine + phosphate = 5-(methylsulfanyl)-alpha-D-ribose 1-phosphate + adenine. It functions in the pathway amino-acid biosynthesis; L-methionine biosynthesis via salvage pathway; S-methyl-5-thio-alpha-D-ribose 1-phosphate from S-methyl-5'-thioadenosine (phosphorylase route): step 1/1. Its function is as follows. Catalyzes the reversible phosphorylation of S-methyl-5'-thioadenosine (MTA) to adenine and 5-methylthioribose-1-phosphate. Involved in the breakdown of MTA, a major by-product of polyamine biosynthesis. Responsible for the first step in the methionine salvage pathway after MTA has been generated from S-adenosylmethionine. Has broad substrate specificity with 6-aminopurine nucleosides as preferred substrates. This is S-methyl-5'-thioadenosine phosphorylase from Coprinopsis cinerea (strain Okayama-7 / 130 / ATCC MYA-4618 / FGSC 9003) (Inky cap fungus).